Here is a 622-residue protein sequence, read N- to C-terminus: Iron transport multicopper oxidase fetC (622 aa).

The N-terminal stretch at 1–20 (MARLVHLTAVLAASIRLAAA) is a signal peptide. The Extracellular segment spans residues 21 to 552 (ATINHDFNVT…DPLPAGFTTR (532 aa)). Residues Asn-28 and Asn-74 are each glycosylated (N-linked (GlcNAc...) asparagine). Plastocyanin-like domains follow at residues 29–144 (VTWV…VHDP) and 154–301 (EEIV…SYDK). The Cu cation site is built by His-80 and His-82. 2 N-linked (GlcNAc...) asparagine glycosylation sites follow: Asn-87 and Asn-112. His-124 and His-126 together coordinate Cu cation. Residues Asn-194, Asn-198, Asn-265, Asn-292, and Asn-358 are each glycosylated (N-linked (GlcNAc...) asparagine). The Plastocyanin-like 3 domain occupies 362 to 497 (KSPKVPTLYS…GLVATFVEAP (136 aa)). Cu cation-binding residues include His-412, His-415, and His-417. Asn-428 carries N-linked (GlcNAc...) asparagine glycosylation. Residues His-478, Cys-479, His-480, and His-484 each contribute to the Cu cation site. The helical transmembrane segment at 553-573 (GIVALVFSCVTGILGICVVAW) threads the bilayer. At 574–622 (YGMSQPLEEATAAVATLVREAQVTGSGTSPNHDDGNAAATEAGVLRRRT) the chain is on the cytoplasmic side. The interval 597 to 622 (TGSGTSPNHDDGNAAATEAGVLRRRT) is disordered.

It belongs to the multicopper oxidase family.

The protein resides in the cell membrane. Its function is as follows. Cell surface ferroxidase; part of the reductive iron assimilatory system (RIA), a siderophore-independent high affinity iron uptake mechanism. Required to oxidize Fe(2+) and release it from the transporter. In Epichloe festucae (strain E2368), this protein is Iron transport multicopper oxidase fetC.